Here is a 165-residue protein sequence, read N- to C-terminus: Ribosome maturation factor RimM (165 aa).

In terms of domain architecture, PRC barrel spans 94–165; the sequence is EDEFYIADLN…YVILNYQTKV (72 aa).

It belongs to the RimM family. As to quaternary structure, binds ribosomal protein uS19.

It is found in the cytoplasm. An accessory protein needed during the final step in the assembly of 30S ribosomal subunit, possibly for assembly of the head region. Essential for efficient processing of 16S rRNA. May be needed both before and after RbfA during the maturation of 16S rRNA. It has affinity for free ribosomal 30S subunits but not for 70S ribosomes. The sequence is that of Ribosome maturation factor RimM from Rickettsia prowazekii (strain Madrid E).